Here is a 261-residue protein sequence, read N- to C-terminus: uncharacterized protein (261 aa).

The N-terminal stretch at 1-22 (MGYSKRFALYISVMILIFAIAG) is a signal peptide. Cys-23 carries the N-palmitoyl cysteine lipid modification. Cys-23 is lipidated: S-diacylglycerol cysteine.

This sequence belongs to the staphylococcal tandem lipoprotein family.

The protein localises to the cell membrane. This is an uncharacterized protein from Staphylococcus aureus (strain N315).